The following is a 601-amino-acid chain: HMG domain-containing protein 4 (601 aa).

K8 participates in a covalent cross-link: Glycyl lysine isopeptide (Lys-Gly) (interchain with G-Cter in SUMO2). Disordered stretches follow at residues 51 to 410 and 473 to 514; these read VRNS…KKKN and TTVK…ASPA. A compositionally biased stretch (low complexity) spans 82–93; sequence DYYYGDISSLES. Residue S102 is modified to Phosphoserine. K191 is covalently cross-linked (Glycyl lysine isopeptide (Lys-Gly) (interchain with G-Cter in SUMO2)). S197 carries the post-translational modification Phosphoserine. Composition is skewed to polar residues over residues 212–221 and 270–282; these read QYPSQQATVK and DASQFAESHSANL. The span at 316-344 shows a compositional bias: basic residues; sequence IKKKKKSKKSKKKKDKEKHKEKRHSKSKR. Residues 394–404 are compositionally biased toward basic and acidic residues; it reads EEKDKERERGE. A DNA-binding region (HMG box) is located at residues 407 to 475; sequence KKKNMSAYQV…KQNKAEATTV (69 aa). S497, S502, and S512 each carry phosphoserine.

It is found in the nucleus. In terms of biological role, negatively regulates Wnt/beta-catenin signaling during development. In Homo sapiens (Human), this protein is HMG domain-containing protein 4 (HMGXB4).